Reading from the N-terminus, the 71-residue chain is Large ribosomal subunit protein eL38 (71 aa).

The protein belongs to the eukaryotic ribosomal protein eL38 family.

This Ixodes scapularis (Black-legged tick) protein is Large ribosomal subunit protein eL38 (RpL38).